A 312-amino-acid chain; its full sequence is Ribosomal RNA small subunit methyltransferase H (312 aa).

Residues 32–34 (AGH), D52, F79, D100, and Q107 contribute to the S-adenosyl-L-methionine site.

It belongs to the methyltransferase superfamily. RsmH family.

The protein localises to the cytoplasm. It catalyses the reaction cytidine(1402) in 16S rRNA + S-adenosyl-L-methionine = N(4)-methylcytidine(1402) in 16S rRNA + S-adenosyl-L-homocysteine + H(+). Specifically methylates the N4 position of cytidine in position 1402 (C1402) of 16S rRNA. This Listeria monocytogenes serotype 4b (strain CLIP80459) protein is Ribosomal RNA small subunit methyltransferase H.